A 215-amino-acid polypeptide reads, in one-letter code: Cytokinin riboside 5'-monophosphate phosphoribohydrolase LOG3 (215 aa).

Substrate contacts are provided by residues Glu-84, 102 to 103 (RK), 119 to 125 (GYGTLEE), and Thr-131.

This sequence belongs to the LOG family. As to expression, expressed in roots and shoots. Detected in root procambium, lateral root primordia, vascular tissues of immature leaves, axillary buds, style and ovular funiculus.

It is found in the cytoplasm. The protein localises to the nucleus. The catalysed reaction is N(6)-(dimethylallyl)adenosine 5'-phosphate + H2O = N(6)-dimethylallyladenine + D-ribose 5-phosphate. It catalyses the reaction 9-ribosyl-trans-zeatin 5'-phosphate + H2O = trans-zeatin + D-ribose 5-phosphate. Cytokinin-activating enzyme working in the direct activation pathway. Phosphoribohydrolase that converts inactive cytokinin nucleotides to the biologically active free-base forms. This Arabidopsis thaliana (Mouse-ear cress) protein is Cytokinin riboside 5'-monophosphate phosphoribohydrolase LOG3 (LOG3).